The sequence spans 448 residues: Cysteine--tRNA ligase (448 aa).

C29 lines the Zn(2+) pocket. The short motif at 31–41 (PTVYNYIHIGN) is the 'HIGH' region element. Zn(2+)-binding residues include C212, H237, and E241. The short motif at 269-273 (KMSKS) is the 'KMSKS' region element. Residue K272 participates in ATP binding.

This sequence belongs to the class-I aminoacyl-tRNA synthetase family. Monomer. Zn(2+) serves as cofactor.

Its subcellular location is the cytoplasm. It catalyses the reaction tRNA(Cys) + L-cysteine + ATP = L-cysteinyl-tRNA(Cys) + AMP + diphosphate. The protein is Cysteine--tRNA ligase of Streptococcus equi subsp. zooepidemicus (strain MGCS10565).